The following is a 396-amino-acid chain: Chalcone synthase B (396 aa).

The active site involves Cys170.

It belongs to the thiolase-like superfamily. Chalcone/stilbene synthases family.

It catalyses the reaction (E)-4-coumaroyl-CoA + 3 malonyl-CoA + 3 H(+) = 2',4,4',6'-tetrahydroxychalcone + 3 CO2 + 4 CoA. The protein operates within secondary metabolite biosynthesis; flavonoid biosynthesis. In terms of biological role, the primary product of this enzyme is 4,2',4',6'-tetrahydroxychalcone (also termed naringenin-chalcone or chalcone) which can under specific conditions spontaneously isomerize into naringenin. This chain is Chalcone synthase B (CHSB), found in Ipomoea purpurea (Common morning glory).